Here is a 76-residue protein sequence, read N- to C-terminus: Large ribosomal subunit protein eL20 (76 aa).

It belongs to the eukaryotic ribosomal protein eL20 family. In terms of assembly, part of the 50S ribosomal subunit. Binds 23S rRNA.

This is Large ribosomal subunit protein eL20 from Methanococcus maripaludis (strain C5 / ATCC BAA-1333).